Here is a 295-residue protein sequence, read N- to C-terminus: MLISLPKVRGIYRYDILMSKATWLNVGGRADILFKPRDIEDLTCLIKNTELPVSVIGATSNIIVRDSGIRGITVKLGKEFAYIKSKGNNSIVAGGAVLLSNLAHFAGNQQISGLEFLVGIPGTVGGGIEMNAGAYGSDIASVVQSIKAVNLEDGNLYEFSSEEMGYFYRGHSLKGNWIFVEAEFKGVNSEYELILQRLKEVIERKNKSQPIRGKTAGCIFKNPKNYRAWELIDKSGCLGLNIGGARISKKHCNFLLNYDNATASDLENLGNKVKDAVKDKFNVELEWEIRVLGSY.

An FAD-binding PCMH-type domain is found at 26–189 (VGGRADILFK…VEAEFKGVNS (164 aa)). Arg169 is an active-site residue. The active-site Proton donor is the Cys218. The active site involves Glu288.

Belongs to the MurB family. It depends on FAD as a cofactor.

It is found in the cytoplasm. The catalysed reaction is UDP-N-acetyl-alpha-D-muramate + NADP(+) = UDP-N-acetyl-3-O-(1-carboxyvinyl)-alpha-D-glucosamine + NADPH + H(+). The protein operates within cell wall biogenesis; peptidoglycan biosynthesis. Its function is as follows. Cell wall formation. The protein is UDP-N-acetylenolpyruvoylglucosamine reductase of Wolbachia sp. subsp. Drosophila simulans (strain wRi).